Consider the following 455-residue polypeptide: Epoxide hydrolase 1 (455 aa).

The helical; Signal-anchor for type III membrane protein transmembrane segment at Met-1–Gly-21 threads the bilayer. At Asp-22–Gln-455 the chain is on the cytoplasmic side. Asp-226 functions as the Nucleophile in the catalytic mechanism. The residue at position 295 (Arg-295) is a Dimethylated arginine. The active-site Proton donor is the Tyr-374. His-431 functions as the Proton acceptor in the catalytic mechanism.

This sequence belongs to the peptidase S33 family.

The protein resides in the microsome membrane. It is found in the endoplasmic reticulum membrane. It catalyses the reaction cis-stilbene oxide + H2O = (1R,2R)-hydrobenzoin. It carries out the reaction 1-(4-methoxyphenyl)-N-methyl-N-[(3-methyloxetan-3-yl)methyl]methanamine + H2O = 2-{[(4-methoxybenzyl)(methyl)amino]methyl}-2-methylpropane-1,3-diol. The catalysed reaction is 8,9-epoxy-(5Z,11Z,14Z)-eicosatrienoate + H2O = 8,9-dihydroxy-(5Z,11Z,14Z)-eicosatrienoate. The enzyme catalyses 11,12-epoxy-(5Z,8Z,14Z)-eicosatrienoate + H2O = 11,12-dihydroxy-(5Z,8Z,14Z)-eicosatrienoate. It catalyses the reaction 2-(5Z,8Z,11Z,14Z-eicosatetraenoyl)-glycerol + H2O = glycerol + (5Z,8Z,11Z,14Z)-eicosatetraenoate + H(+). Inhibited by 10-hydroxystearamide and methoxy-arachidonyl fluorophosphate. Its function is as follows. Biotransformation enzyme that catalyzes the hydrolysis of arene and aliphatic epoxides to less reactive and more water soluble dihydrodiols by the trans addition of water. May play a role in the metabolism of endogenous lipids such as epoxide-containing fatty acids. Metabolizes the abundant endocannabinoid 2-arachidonoylglycerol (2-AG) to free arachidonic acid (AA) and glycerol. Binds 20(S)-hydroxycholesterol (20(S)-OHC). The sequence is that of Epoxide hydrolase 1 (EPHX1) from Oryctolagus cuniculus (Rabbit).